The sequence spans 256 residues: Indole-3-glycerol phosphate synthase (256 aa).

This sequence belongs to the TrpC family.

It carries out the reaction 1-(2-carboxyphenylamino)-1-deoxy-D-ribulose 5-phosphate + H(+) = (1S,2R)-1-C-(indol-3-yl)glycerol 3-phosphate + CO2 + H2O. It functions in the pathway amino-acid biosynthesis; L-tryptophan biosynthesis; L-tryptophan from chorismate: step 4/5. This Chlorobaculum tepidum (strain ATCC 49652 / DSM 12025 / NBRC 103806 / TLS) (Chlorobium tepidum) protein is Indole-3-glycerol phosphate synthase.